The primary structure comprises 345 residues: MSKQSLSYKDAGVDINAGNALVDRIKPHVKRTTRPEVIGGLGGFGALCALPTKYKEPVLVSGTDGVGTKLRLAIDLNKHDTIGIDLVAMCVNDLVVQGAEPLFFLDYYATGKLDVDVATDVVAGIAEGCVQSGCALIGGETAEMPGMYHAGDYDLGGFCVGVVERAKIIDGSKVKTGDALIALGSSGPHSNGYSLIRKVIEVAGVNPATEQLAGRPLADQVLAPTKIYVKSVLELIEHVDVHAIAHLTGGGFWENIPRVLPEDVKVVINENSWEWQPVFKWLQEQGNITRHEMYRTFNCGVGMVIALPQADAEKALQVLKAAGENAWLIGQVEPLNAGEEQVIIR.

This sequence belongs to the AIR synthase family.

Its subcellular location is the cytoplasm. It carries out the reaction 2-formamido-N(1)-(5-O-phospho-beta-D-ribosyl)acetamidine + ATP = 5-amino-1-(5-phospho-beta-D-ribosyl)imidazole + ADP + phosphate + H(+). It functions in the pathway purine metabolism; IMP biosynthesis via de novo pathway; 5-amino-1-(5-phospho-D-ribosyl)imidazole from N(2)-formyl-N(1)-(5-phospho-D-ribosyl)glycinamide: step 2/2. This is Phosphoribosylformylglycinamidine cyclo-ligase from Mannheimia succiniciproducens (strain KCTC 0769BP / MBEL55E).